The chain runs to 181 residues: MGYPGKNHKQYQTPKRPFELSRIEEETRLVIEYGLRNKREVWIAKGALRKYRKAAREIIALQSTGSEQARVERKKDELIGSLQRSGMLSENADIDDVLALKVEQQLDRRLQTQVYRRGFARSPKQARQFITHGHIAIGGRRVTIPGYTVSAKEQEEISYAGSSPLVSDIHSERQRIAKVGR.

The region spanning 108–172 (RRLQTQVYRR…SPLVSDIHSE (65 aa)) is the S4 RNA-binding domain.

It belongs to the universal ribosomal protein uS4 family. Part of the 30S ribosomal subunit. Contacts protein S5. The interaction surface between S4 and S5 is involved in control of translational fidelity.

Functionally, one of the primary rRNA binding proteins, it binds directly to 16S rRNA where it nucleates assembly of the body of the 30S subunit. With S5 and S12 plays an important role in translational accuracy. The sequence is that of Small ribosomal subunit protein uS4 from Methanospirillum hungatei JF-1 (strain ATCC 27890 / DSM 864 / NBRC 100397 / JF-1).